The chain runs to 380 residues: MAGSDVDSEGPARRGGAARRPGAPGGPGSEAAAGCPEPLSTAEAPAESATLPAWMRLYFYGMHGITLDVLVSSARRFARSPDLRMLGFSSPYRCLLHSLTHFALEKVYLQQRRCPNAFVFNFLLYPSAHVGLQTLAGQALLLSLGGGAGVAVAPGALDLALQYVLALYHCQVFLKRFLRLRYGRQRRRQQQQQQQQQQQQRRGALPVPPGARVPTAAGARRRRPRGPRGAGGAPSQGLPDLPRFLFFGMHGFLDEIFFTFFFNVLGQGDGTTSGHTSLWSFFMYGSCSFVVEKLYFHLHYSRGWGTWKRVPIYVIFIYVWELSWGLGLRTCGACSWDYSHYPLNFMGLITLMYLPGWIFLSVYQDLISNVLWRVQYVPAN.

The interval 1-40 (MAGSDVDSEGPARRGGAARRPGAPGGPGSEAAAGCPEPLS) is disordered. 2 helical membrane-spanning segments follow: residues 51 to 71 (LPAWMRLYFYGMHGITLDVLV) and 117 to 137 (AFVFNFLLYPSAHVGLQTLAG). The disordered stretch occupies residues 188-236 (RQQQQQQQQQQQQRRGALPVPPGARVPTAAGARRRRPRGPRGAGGAPSQ). Low complexity predominate over residues 190–202 (QQQQQQQQQQQRR). Helical transmembrane passes span 244-264 (FLFFGMHGFLDEIFFTFFFNV), 278-298 (LWSFFMYGSCSFVVEKLYFHL), 310-330 (VPIYVIFIYVWELSWGLGLRT), and 343-363 (LNFMGLITLMYLPGWIFLSVY).

Belongs to the TMEM229 family.

The protein resides in the membrane. This chain is Transmembrane protein 229A (TMEM229A), found in Homo sapiens (Human).